The primary structure comprises 270 residues: Type III pantothenate kinase (270 aa).

Asp11–Lys18 lines the ATP pocket. Residues Tyr96 and Gly103–Arg106 contribute to the substrate site. Catalysis depends on Asp105, which acts as the Proton acceptor. Position 129 (Thr129) interacts with ATP. Thr195 is a binding site for substrate.

It belongs to the type III pantothenate kinase family. As to quaternary structure, homodimer. It depends on NH4(+) as a cofactor. Requires K(+) as cofactor.

The protein localises to the cytoplasm. The catalysed reaction is (R)-pantothenate + ATP = (R)-4'-phosphopantothenate + ADP + H(+). Its pathway is cofactor biosynthesis; coenzyme A biosynthesis; CoA from (R)-pantothenate: step 1/5. Functionally, catalyzes the phosphorylation of pantothenate (Pan), the first step in CoA biosynthesis. This is Type III pantothenate kinase from Paraburkholderia phytofirmans (strain DSM 17436 / LMG 22146 / PsJN) (Burkholderia phytofirmans).